The sequence spans 323 residues: Protein translocase subunit SecF (323 aa).

Helical transmembrane passes span 19-39, 138-158, 162-182, 189-209, 244-264, and 269-289; these read GVIV…FKGF, ILSL…RYEW, LASV…VIVF, EVIA…IIIF, LTVF…IIGF, and LIGT…VALL.

The protein belongs to the SecD/SecF family. SecF subfamily. As to quaternary structure, forms a complex with SecD. Part of the essential Sec protein translocation apparatus which comprises SecA, SecYEG and auxiliary proteins SecDF-YajC and YidC.

It localises to the cell inner membrane. Part of the Sec protein translocase complex. Interacts with the SecYEG preprotein conducting channel. SecDF uses the proton motive force (PMF) to complete protein translocation after the ATP-dependent function of SecA. The chain is Protein translocase subunit SecF from Helicobacter pylori (strain J99 / ATCC 700824) (Campylobacter pylori J99).